We begin with the raw amino-acid sequence, 210 residues long: ATP-dependent Clp protease proteolytic subunit (210 aa).

Serine 113 (nucleophile) is an active-site residue. Histidine 138 is an active-site residue.

The protein belongs to the peptidase S14 family. In terms of assembly, fourteen ClpP subunits assemble into 2 heptameric rings which stack back to back to give a disk-like structure with a central cavity, resembling the structure of eukaryotic proteasomes.

It localises to the cytoplasm. It carries out the reaction Hydrolysis of proteins to small peptides in the presence of ATP and magnesium. alpha-casein is the usual test substrate. In the absence of ATP, only oligopeptides shorter than five residues are hydrolyzed (such as succinyl-Leu-Tyr-|-NHMec, and Leu-Tyr-Leu-|-Tyr-Trp, in which cleavage of the -Tyr-|-Leu- and -Tyr-|-Trp bonds also occurs).. Functionally, cleaves peptides in various proteins in a process that requires ATP hydrolysis. Has a chymotrypsin-like activity. Plays a major role in the degradation of misfolded proteins. This is ATP-dependent Clp protease proteolytic subunit from Marinomonas sp. (strain MWYL1).